The primary structure comprises 281 residues: E3 ubiquitin-protein ligase MARCHF5 (281 aa).

The RING-CH-type zinc finger occupies 9 to 78 (LPQTMDRSCW…PQCNAEYLIV (70 aa)). 8 residues coordinate Zn(2+): Cys-17, Cys-20, Cys-36, Cys-38, His-46, Cys-49, Cys-68, and Cys-71. 4 helical membrane passes run 102–122 (FAAAGIMVGSIYWTAVTYGAV), 142–162 (PLFLLIGLPTIPVMLILGKMI), 212–232 (ILCGALVFPTIATIVGKLMFS), and 241–261 (TILGGIAFVAIKGAFKVYFKQ).

The protein resides in the mitochondrion outer membrane. It localises to the endoplasmic reticulum membrane. It carries out the reaction S-ubiquitinyl-[E2 ubiquitin-conjugating enzyme]-L-cysteine + [acceptor protein]-L-lysine = [E2 ubiquitin-conjugating enzyme]-L-cysteine + N(6)-ubiquitinyl-[acceptor protein]-L-lysine.. The protein operates within protein modification; protein ubiquitination. Mitochondrial E3 ubiquitin-protein ligase that plays a crucial role in the control of mitochondrial morphology by acting as a positive regulator of mitochondrial fission. May play a role in the prevention of cell senescence acting as a regulator of mitochondrial quality control. This is E3 ubiquitin-protein ligase MARCHF5 (MARCHF5) from Gallus gallus (Chicken).